We begin with the raw amino-acid sequence, 296 residues long: Nitrogenase iron protein (296 aa).

11–18 (GKGGIGKS) is an ATP binding site. C99 provides a ligand contact to [4Fe-4S] cluster. Residue R102 is modified to ADP-ribosylarginine; by dinitrogenase reductase ADP-ribosyltransferase. C134 contacts [4Fe-4S] cluster.

This sequence belongs to the NifH/BchL/ChlL family. In terms of assembly, homodimer. It depends on [4Fe-4S] cluster as a cofactor. Post-translationally, the reversible ADP-ribosylation of Arg-102 inactivates the nitrogenase reductase and regulates nitrogenase activity.

The enzyme catalyses N2 + 8 reduced [2Fe-2S]-[ferredoxin] + 16 ATP + 16 H2O = H2 + 8 oxidized [2Fe-2S]-[ferredoxin] + 2 NH4(+) + 16 ADP + 16 phosphate + 6 H(+). In terms of biological role, the key enzymatic reactions in nitrogen fixation are catalyzed by the nitrogenase complex, which has 2 components: the iron protein and the molybdenum-iron protein. This chain is Nitrogenase iron protein, found in Dechloromonas aromatica (strain RCB).